The primary structure comprises 154 residues: MNIIQGNLVGTGLKIGIVVGRFNDFITSKLLSGAEDALLRHGVDTNDIDVAWVPGAFEIPFAAKKMAETKKYDAIITLGTVIRGATTHYDYVCNEAAKGIAQAANTTGVPVIFGIVTTENIEQAIERAGTKAGNKGVDCAVSAIEMANLNRSFE.

5-amino-6-(D-ribitylamino)uracil-binding positions include 22–23, 56–58, and 80–82; these read FN, AFE, and TVI. A (2S)-2-hydroxy-3-oxobutyl phosphate-binding site is contributed by 85–86; the sequence is AT. H88 (proton donor) is an active-site residue. F113 contributes to the 5-amino-6-(D-ribitylamino)uracil binding site. Position 127 (R127) interacts with (2S)-2-hydroxy-3-oxobutyl phosphate.

The protein belongs to the DMRL synthase family. Forms an icosahedral capsid composed of 60 subunits, arranged as a dodecamer of pentamers. Can interact with riboflavin synthase, forming a lumazine synthase/riboflavin synthase complex, also designated as 'heavy riboflavin synthase complex', which consists of a trimer of riboflavin synthase enclosed within the icosahedral structure composed of 60 subunits of 6,7-dimethyl-8-ribityllumazine synthase.

The enzyme catalyses (2S)-2-hydroxy-3-oxobutyl phosphate + 5-amino-6-(D-ribitylamino)uracil = 6,7-dimethyl-8-(1-D-ribityl)lumazine + phosphate + 2 H2O + H(+). Its pathway is cofactor biosynthesis; riboflavin biosynthesis; riboflavin from 2-hydroxy-3-oxobutyl phosphate and 5-amino-6-(D-ribitylamino)uracil: step 1/2. Catalyzes the formation of 6,7-dimethyl-8-ribityllumazine by condensation of 5-amino-6-(D-ribitylamino)uracil with 3,4-dihydroxy-2-butanone 4-phosphate. This is the penultimate step in the biosynthesis of riboflavin. Is able to use the non-natural R enantiomer of 3,4-dihydroxy-2-butanone 4-phosphate as a substrate, but with less efficiency than the natural S enantiomer. Cannot use unphosphorylated 3,4-dihydroxy-2-butanone, 3,4-dihydroxy-2-butanone 3-phosphate or diacetyl as substrates. This chain is 6,7-dimethyl-8-ribityllumazine synthase (ribH), found in Bacillus subtilis (strain 168).